The primary structure comprises 169 residues: Photosystem I assembly protein Ycf3 (169 aa).

TPR repeat units lie at residues 35-68 (AFTY…EIDP), 72-105 (SYIL…NPSL), and 120-153 (GEQA…APNN).

It belongs to the Ycf3 family.

The protein localises to the plastid. Its subcellular location is the chloroplast thylakoid membrane. In terms of biological role, essential for the assembly of the photosystem I (PSI) complex. May act as a chaperone-like factor to guide the assembly of the PSI subunits. The polypeptide is Photosystem I assembly protein Ycf3 (Staurastrum punctulatum (Green alga)).